The primary structure comprises 430 residues: Lipoyl synthase, mitochondrial (430 aa).

The transit peptide at 1 to 37 directs the protein to the mitochondrion; sequence MAASTGKLRTLFSAHSSLSARPSSALPALRLTILRSY. Residues 40–56 show a composition bias toward low complexity; sequence TTPPDSSISNPSNPSTT. Positions 40 to 64 are disordered; the sequence is TTPPDSSISNPSNPSTTVKRPPTAF. [4Fe-4S] cluster is bound by residues Cys-141, Cys-146, Cys-152, Cys-172, Cys-176, Cys-179, and Ser-387. A Radical SAM core domain is found at 155-376; sequence GSSKSAATAT…KERALEMGFL (222 aa).

Belongs to the radical SAM superfamily. Lipoyl synthase family. [4Fe-4S] cluster is required as a cofactor.

It localises to the mitochondrion. The enzyme catalyses [[Fe-S] cluster scaffold protein carrying a second [4Fe-4S](2+) cluster] + N(6)-octanoyl-L-lysyl-[protein] + 2 oxidized [2Fe-2S]-[ferredoxin] + 2 S-adenosyl-L-methionine + 4 H(+) = [[Fe-S] cluster scaffold protein] + N(6)-[(R)-dihydrolipoyl]-L-lysyl-[protein] + 4 Fe(3+) + 2 hydrogen sulfide + 2 5'-deoxyadenosine + 2 L-methionine + 2 reduced [2Fe-2S]-[ferredoxin]. The protein operates within protein modification; protein lipoylation via endogenous pathway; protein N(6)-(lipoyl)lysine from octanoyl-[acyl-carrier-protein]: step 2/2. Its function is as follows. Catalyzes the radical-mediated insertion of two sulfur atoms into the C-6 and C-8 positions of the octanoyl moiety bound to the lipoyl domains of lipoate-dependent enzymes, thereby converting the octanoylated domains into lipoylated derivatives. The chain is Lipoyl synthase, mitochondrial from Blastomyces gilchristii (strain SLH14081) (Blastomyces dermatitidis).